The following is a 150-amino-acid chain: MANPAVGAMMGLSLVAVPVFLDTNTQSEQLLAQFASLYDYGHKLMPTIAVATCALHGWVAARKRAAHQPWGRPVLAAVTTITMVPFTWVCMVSTNNALFQLHKGADANMEMVRALIARWQWLHVARSLFPLAGAIVACQTLLKELVGGSR.

Transmembrane regions (helical) follow at residues Met-1–Leu-21, Gly-41–Ala-61, Pro-73–Ser-93, and Leu-128–Gly-148.

Belongs to the anthrone oxygenase family.

Its subcellular location is the membrane. It carries out the reaction emodin anthrone + O2 = emodin + H2O + H(+). It participates in secondary metabolite biosynthesis. Functionally, anthrone oxygenase; part of the gene cluster that mediates the biosynthesis of geodin, an intermediate in the biosynthesis of other natural products. The pathway begins with the synthesis of atrochrysone thioester by the polyketide synthase (PKS) gedC. The atrochrysone carboxyl ACP thioesterase gedB then breaks the thioester bond and releases the atrochrysone carboxylic acid from gedC. The atrochrysone carboxylic acid is then converted to atrochrysone which is further transformed into emodin anthrone. The next step is performed by the emodin anthrone oxygenase gedH that catalyzes the oxidation of emodinanthrone to emodin. Emodin O-methyltransferase encoded probably by gedA then catalyzes methylation of the 8-hydroxy group of emodin to form questin. Ring cleavage of questin by questin oxidase gedK leads to desmethylsulochrin via several intermediates including questin epoxide. Another methylation step probably catalyzed by methyltransferase gedG leads to the formation of sulochrin which is further converted to dihydrogeodin by the sulochrin halogenase gedL. Finally, the dihydrogeodin oxidase gedJ catalyzes the stereospecific phenol oxidative coupling reaction converting dihydrogeodin to geodin. The protein is Anthrone oxygenase gedH of Aspergillus terreus (strain NIH 2624 / FGSC A1156).